The following is a 640-amino-acid chain: Threonine--tRNA ligase (640 aa).

One can recognise a TGS domain in the interval 1–61 (MPVITLPDGS…SNDATLQIIT (61 aa)). Positions 242–533 (DHRKIGKQLD…LIEHYAGVFP (292 aa)) are catalytic. Zn(2+) contacts are provided by Cys-333, His-384, and His-510.

It belongs to the class-II aminoacyl-tRNA synthetase family. In terms of assembly, homodimer. Requires Zn(2+) as cofactor.

It localises to the cytoplasm. The catalysed reaction is tRNA(Thr) + L-threonine + ATP = L-threonyl-tRNA(Thr) + AMP + diphosphate + H(+). In terms of biological role, catalyzes the attachment of threonine to tRNA(Thr) in a two-step reaction: L-threonine is first activated by ATP to form Thr-AMP and then transferred to the acceptor end of tRNA(Thr). Also edits incorrectly charged L-seryl-tRNA(Thr). The chain is Threonine--tRNA ligase from Pseudomonas putida (strain ATCC 47054 / DSM 6125 / CFBP 8728 / NCIMB 11950 / KT2440).